Here is a 363-residue protein sequence, read N- to C-terminus: Neutral protease 2 homolog NFIA_102630 (363 aa).

Positions 1–19 (MKVTVLASAILALINGALA) are cleaved as a signal peptide. The propeptide occupies 20–172 (LPANAPTLDV…PQAIKLLDRR (153 aa)). Cystine bridges form between Cys-178–Cys-250 and Cys-257–Cys-275. Residue His-300 coordinates Zn(2+). The active site involves Glu-301. Residues His-304 and Asp-315 each coordinate Zn(2+).

This sequence belongs to the peptidase M35 family. Zn(2+) is required as a cofactor.

It is found in the secreted. The enzyme catalyses Preferential cleavage of bonds with hydrophobic residues in P1'. Also 3-Asn-|-Gln-4 and 8-Gly-|-Ser-9 bonds in insulin B chain.. In terms of biological role, secreted metalloproteinase that allows assimilation of proteinaceous substrates. Shows high activities on basic nuclear substrates such as histone and protamine. This is Neutral protease 2 homolog NFIA_102630 from Neosartorya fischeri (strain ATCC 1020 / DSM 3700 / CBS 544.65 / FGSC A1164 / JCM 1740 / NRRL 181 / WB 181) (Aspergillus fischerianus).